A 334-amino-acid chain; its full sequence is Beta-hexosaminidase (334 aa).

Substrate is bound by residues D62, R70, R130, and 160-161 (KH). H173 functions as the Proton donor/acceptor in the catalytic mechanism. D243 functions as the Nucleophile in the catalytic mechanism.

Belongs to the glycosyl hydrolase 3 family. NagZ subfamily.

The protein resides in the cytoplasm. The enzyme catalyses Hydrolysis of terminal non-reducing N-acetyl-D-hexosamine residues in N-acetyl-beta-D-hexosaminides.. It functions in the pathway cell wall biogenesis; peptidoglycan recycling. In terms of biological role, plays a role in peptidoglycan recycling by cleaving the terminal beta-1,4-linked N-acetylglucosamine (GlcNAc) from peptide-linked peptidoglycan fragments, giving rise to free GlcNAc, anhydro-N-acetylmuramic acid and anhydro-N-acetylmuramic acid-linked peptides. This is Beta-hexosaminidase from Photobacterium profundum (strain SS9).